We begin with the raw amino-acid sequence, 185 residues long: Ribosome-recycling factor (185 aa).

The protein belongs to the RRF family.

It localises to the cytoplasm. Responsible for the release of ribosomes from messenger RNA at the termination of protein biosynthesis. May increase the efficiency of translation by recycling ribosomes from one round of translation to another. This Clostridium botulinum (strain Alaska E43 / Type E3) protein is Ribosome-recycling factor.